Here is a 327-residue protein sequence, read N- to C-terminus: DNA-directed RNA polymerase subunit alpha (327 aa).

The tract at residues Met-1–Glu-233 is alpha N-terminal domain (alpha-NTD). The segment at Leu-267–Lys-327 is alpha C-terminal domain (alpha-CTD).

The protein belongs to the RNA polymerase alpha chain family. In terms of assembly, in plastids the minimal PEP RNA polymerase catalytic core is composed of four subunits: alpha, beta, beta', and beta''. When a (nuclear-encoded) sigma factor is associated with the core the holoenzyme is formed, which can initiate transcription.

The protein localises to the plastid. Its subcellular location is the chloroplast. It carries out the reaction RNA(n) + a ribonucleoside 5'-triphosphate = RNA(n+1) + diphosphate. DNA-dependent RNA polymerase catalyzes the transcription of DNA into RNA using the four ribonucleoside triphosphates as substrates. This chain is DNA-directed RNA polymerase subunit alpha, found in Crucihimalaya wallichii (Rock-cress).